The following is a 607-amino-acid chain: Autophagy-related protein 16-1 (607 aa).

Residues 13 to 43 (WKRHISEQLRRRDRLQRQAFEEIILQYNKLL) are interaction with ATG5. Positions 78-230 (NDNQLQEMAQ…QKELAEAAKE (153 aa)) form a coiled coil. Position 139 is a phosphoserine; by CK2 (serine 139). Positions 207-230 (AENEKDSRRRQARLQKELAEAAKE) are WIPI2-binding. Residues 230-242 (EPLPVEQDDDIEV) form an RB1CC1-binding region. A phosphoserine mark is found at serine 269 and serine 287. Positions 296-299 (DNVD) match the Caspase cleavage motif. WD repeat units lie at residues 320 to 359 (AHDGEVNAVQFSPGSRLLATGGMDRRVKLWEVFGEKCEFK), 364 to 403 (GSNAGITSIEFDSAGSYLLAASNDFASRIWTVDDYRLRHT), 406 to 445 (GHSGKVLSAKFLLDNARIVSGSHDRTLKLWDLRSKVCIKT), 447 to 484 (FAGSSCNDIVCTEQCVMSGHFDKKIRFWDIRSESIVRE), 486 to 525 (ELLGKITALDLNPERTELLSCSRDDLLKVIDLRTNAIKQT), 532 to 573 (KCGS…KVLS), and 575 to 607 (QHSSSINAVAWSPSGSHVVSVDKGCKAVLWAQY).

The protein belongs to the WD repeat ATG16 family. In terms of assembly, homodimer. Homooligomer. Heterooligomer with ATG16L2. Interacts with WIPI1. Interacts with WIPI2. Interacts with RB1CC1; the interaction is required for ULK1 complex-dependent autophagy. Interacts with ATG5. Part of the minor complex composed of 4 sets of ATG12-ATG5 and ATG16L1 (400 kDa); this complex interacts with ATG3 leading to disruption of ATG7 interaction and promotion of ATG8-like proteins lipidation. Part of the major complex composed of 8 sets of ATG12-ATG5 and ATG16L1 (800 kDa). Interacts with RAB33B (GTP- and GDP-bound forms); the complex consists of a tetramer where two RAB33B molecules bind independently one molecule of the ATG16L1 homodimer; the interaction promotes ATG12-ATG5-ATG16L1 complex recruitment to phagophores. Interacts (via WD repeats) with TMEM59; the interaction mediates unconventional autophagic activity of TMEM59. Interacts with TLR2. Interacts (via WD repeats) with MEFV. Interacts with PPP1CA; the interaction dephosphorylates ATG16L1 causing dissociation of ATG12-ATG5-ATG16L1 complex. Interacts (via N-terminal) with CLTC. Interacts with NOD1. Interacts with NOD2. Interacts with TUFM. Interacts with TRIM16. Interacts (via WD repeats) with SPATA33. Interacts with IRGM. Post-translationally, proteolytic cleavage by activated CASP3 leads to degradation and may regulate autophagy upon cellular stress and apoptotic stimuli. In terms of processing, phosphorylation at Ser-139 promotes association with the ATG12-ATG5 conjugate to form the ATG12-ATG5-ATG16L1 complex.

Its subcellular location is the cytoplasm. It is found in the preautophagosomal structure membrane. The protein localises to the endosome membrane. It localises to the lysosome membrane. Plays an essential role in both canonical and non-canonical autophagy: interacts with ATG12-ATG5 to mediate the lipidation to ATG8 family proteins (MAP1LC3A, MAP1LC3B, MAP1LC3C, GABARAPL1, GABARAPL2 and GABARAP). Acts as a molecular hub, coordinating autophagy pathways via distinct domains that support either canonical or non-canonical signaling. During canonical autophagy, interacts with ATG12-ATG5 to mediate the conjugation of phosphatidylethanolamine (PE) to ATG8 proteins, to produce a membrane-bound activated form of ATG8. Thereby, controls the elongation of the nascent autophagosomal membrane. As part of the ATG8 conjugation system with ATG5 and ATG12, required for recruitment of LRRK2 to stressed lysosomes and induction of LRRK2 kinase activity in response to lysosomal stress. Also involved in non-canonical autophagy, a parallel pathway involving conjugation of ATG8 proteins to single membranes at endolysosomal compartments, probably by catalyzing conjugation of phosphatidylserine (PS) to ATG8. Non-canonical autophagy plays a key role in epithelial cells to limit lethal infection by influenza A (IAV) virus. Regulates mitochondrial antiviral signaling (MAVS)-dependent type I interferon (IFN-I) production. Negatively regulates NOD1- and NOD2-driven inflammatory cytokine response. Instead, promotes an autophagy-dependent antibacterial pathway together with NOD1 or NOD2. Plays a role in regulating morphology and function of Paneth cell. The polypeptide is Autophagy-related protein 16-1 (Homo sapiens (Human)).